The sequence spans 557 residues: Kelch repeat and BTB domain-containing protein 2 (557 aa).

The BTB domain occupies 26–95 (CDVIITIRDG…LYNRHISSMN (70 aa)). Residues 143 to 223 (IVKYIKRMLM…CIDIQNLDKK (81 aa)) form the BACK domain. Kelch repeat units follow at residues 305-352 (EIII…VIDD), 353-399 (TIYA…VLDQ), and 415-464 (SVHA…SHED).

In terms of assembly, interacts (via BTB domain) with host CUL3.

Its subcellular location is the host cytoplasm. Probable substrate-specific adapter of CUL3-containing E3 ubiquitin-protein ligases which mediate the ubiquitination and subsequent proteasomal degradation of host target proteins. This Cowpox virus (strain Brighton Red) (CPV) protein is Kelch repeat and BTB domain-containing protein 2 (KBTB2).